The following is a 153-amino-acid chain: 6,7-dimethyl-8-ribityllumazine synthase (153 aa).

Residues F22, 56–58 (AFE), and 80–82 (AVI) each bind 5-amino-6-(D-ribitylamino)uracil. Position 85–86 (85–86 (ST)) interacts with (2S)-2-hydroxy-3-oxobutyl phosphate. Residue H88 is the Proton donor of the active site. F113 contacts 5-amino-6-(D-ribitylamino)uracil. R127 contributes to the (2S)-2-hydroxy-3-oxobutyl phosphate binding site.

This sequence belongs to the DMRL synthase family.

It carries out the reaction (2S)-2-hydroxy-3-oxobutyl phosphate + 5-amino-6-(D-ribitylamino)uracil = 6,7-dimethyl-8-(1-D-ribityl)lumazine + phosphate + 2 H2O + H(+). The protein operates within cofactor biosynthesis; riboflavin biosynthesis; riboflavin from 2-hydroxy-3-oxobutyl phosphate and 5-amino-6-(D-ribitylamino)uracil: step 1/2. Its function is as follows. Catalyzes the formation of 6,7-dimethyl-8-ribityllumazine by condensation of 5-amino-6-(D-ribitylamino)uracil with 3,4-dihydroxy-2-butanone 4-phosphate. This is the penultimate step in the biosynthesis of riboflavin. The chain is 6,7-dimethyl-8-ribityllumazine synthase from Fusobacterium nucleatum subsp. nucleatum (strain ATCC 25586 / DSM 15643 / BCRC 10681 / CIP 101130 / JCM 8532 / KCTC 2640 / LMG 13131 / VPI 4355).